Consider the following 42-residue polypeptide: Photosystem I reaction center subunit IX (42 aa).

Residues 7–27 (FLSTAPVLIMALLTVTAGILI) form a helical membrane-spanning segment.

It belongs to the PsaJ family.

The protein resides in the cellular thylakoid membrane. Functionally, may help in the organization of the PsaE and PsaF subunits. The chain is Photosystem I reaction center subunit IX from Crocosphaera subtropica (strain ATCC 51142 / BH68) (Cyanothece sp. (strain ATCC 51142)).